A 361-amino-acid polypeptide reads, in one-letter code: Mitochondrial import receptor subunit TOM40 homolog (361 aa).

Over residues 1–10 (MGNVLAASSP) the composition is skewed to low complexity. A disordered region spans residues 1–71 (MGNVLAASSP…TASASGAAED (71 aa)). A compositionally biased stretch (pro residues) spans 11–36 (PAGPPPPPAPALVGLPPPPPSPPGFT). Composition is skewed to low complexity over residues 37–52 (LPPLGGSLGAGTSTSR) and 59–71 (GAATASASGAAED).

It belongs to the Tom40 family. Forms part of the preprotein translocase complex of the outer mitochondrial membrane (TOM complex) which consists of at least 7 different proteins (TOMM5, TOMM6, TOMM7, TOMM20, TOMM22, TOMM40 and TOMM70). Interacts with mitochondrial targeting sequences. Interacts with TIMM29; linking the TIM22 complex to the TOM complex. Forms a complex with BCAP31 (via C-terminus) which mediates the translocation of components of the mitochondrial membrane respiratory chain NADH dehydrogenase (Complex I) from the cytosol to the mitochondria. Interacts (via N-terminus) with CYP1A1 (via mitochondrial targeting signal); this interaction is required for CYP1A1 translocation across the mitochondrial outer membrane.

The protein localises to the mitochondrion outer membrane. In terms of biological role, channel-forming protein essential for import of protein precursors into mitochondria. Plays a role in the assembly of the mitochondrial membrane respiratory chain NADH dehydrogenase (Complex I) by forming a complex with BCAP31 and mediating the translocation of Complex I components from the cytosol to the mitochondria. The polypeptide is Mitochondrial import receptor subunit TOM40 homolog (TOMM40) (Homo sapiens (Human)).